The sequence spans 330 residues: Beta-ketoacyl-[acyl-carrier-protein] synthase III (330 aa).

Catalysis depends on residues cysteine 114 and histidine 255. An ACP-binding region spans residues 256-260; that stretch reads QANQR. Asparagine 285 is an active-site residue.

Belongs to the thiolase-like superfamily. FabH family. As to quaternary structure, homodimer.

Its subcellular location is the cytoplasm. It catalyses the reaction malonyl-[ACP] + acetyl-CoA + H(+) = 3-oxobutanoyl-[ACP] + CO2 + CoA. The protein operates within lipid metabolism; fatty acid biosynthesis. Catalyzes the condensation reaction of fatty acid synthesis by the addition to an acyl acceptor of two carbons from malonyl-ACP. Catalyzes the first condensation reaction which initiates fatty acid synthesis and may therefore play a role in governing the total rate of fatty acid production. Possesses both acetoacetyl-ACP synthase and acetyl transacylase activities. Its substrate specificity determines the biosynthesis of branched-chain and/or straight-chain of fatty acids. This Nostoc sp. (strain PCC 7120 / SAG 25.82 / UTEX 2576) protein is Beta-ketoacyl-[acyl-carrier-protein] synthase III.